Here is a 589-residue protein sequence, read N- to C-terminus: Pyruvate kinase (589 aa).

Arg-32 is a binding site for substrate. Residues Asn-34, Ser-36, Asp-66, and Thr-67 each coordinate K(+). 34–37 contributes to the ATP binding site; sequence NFSH. ATP-binding residues include Arg-73 and Lys-157. Glu-223 provides a ligand contact to Mg(2+). Gly-246, Asp-247, and Thr-279 together coordinate substrate. Asp-247 contacts Mg(2+).

Belongs to the pyruvate kinase family. It in the C-terminal section; belongs to the PEP-utilizing enzyme family. In terms of assembly, homotetramer. Mg(2+) is required as a cofactor. Requires K(+) as cofactor.

It catalyses the reaction pyruvate + ATP = phosphoenolpyruvate + ADP + H(+). The protein operates within carbohydrate degradation; glycolysis; pyruvate from D-glyceraldehyde 3-phosphate: step 5/5. With respect to regulation, strongly activated by glucose-6-phosphate, ribose-5-phosphate and fructose-6-phosphate. Weak activator AMP and weak inhibitor fructose-1,6-bisphosphate can act as strong inhibitors in the presence of strong activators. The protein is Pyruvate kinase (pyk) of Lactobacillus delbrueckii subsp. bulgaricus.